A 538-amino-acid chain; its full sequence is Putative cysteine ligase BshC (538 aa).

A coiled-coil region spans residues 454–482; it reads LEKNAGFIQDQLQFLEKTVIRRIEEKENY.

The protein belongs to the BshC family.

Involved in bacillithiol (BSH) biosynthesis. May catalyze the last step of the pathway, the addition of cysteine to glucosamine malate (GlcN-Mal) to generate BSH. This Bacillus licheniformis (strain ATCC 14580 / DSM 13 / JCM 2505 / CCUG 7422 / NBRC 12200 / NCIMB 9375 / NCTC 10341 / NRRL NRS-1264 / Gibson 46) protein is Putative cysteine ligase BshC.